The chain runs to 152 residues: Methylglyoxal synthase (152 aa).

The MGS-like domain maps to 1 to 152 (MELTTRTIAA…YDRYLQQRLK (152 aa)). Substrate is bound by residues His19, Lys23, 45–48 (TGTT), and 65–66 (SG). Asp71 (proton donor/acceptor) is an active-site residue. His98 is a substrate binding site.

This sequence belongs to the methylglyoxal synthase family.

It catalyses the reaction dihydroxyacetone phosphate = methylglyoxal + phosphate. Functionally, catalyzes the formation of methylglyoxal from dihydroxyacetone phosphate. In Yersinia enterocolitica serotype O:8 / biotype 1B (strain NCTC 13174 / 8081), this protein is Methylglyoxal synthase.